Here is a 334-residue protein sequence, read N- to C-terminus: Holliday junction branch migration complex subunit RuvB (334 aa).

A large ATPase domain (RuvB-L) region spans residues 1-182 (MDERLVSTEA…FGVHARLEYY (182 aa)). Residues Leu-21, Arg-22, Gly-63, Lys-66, Thr-67, Thr-68, 129–131 (EDF), Arg-172, Tyr-182, and Arg-219 each bind ATP. Thr-67 contributes to the Mg(2+) binding site. Positions 183-253 (EQRDLAHIVS…IAEDALERLQ (71 aa)) are small ATPAse domain (RuvB-S). Residues 256-334 (KLGLDHIDHK…HFQMEVPIRD (79 aa)) form a head domain (RuvB-H) region. Residues Arg-311 and Arg-316 each coordinate DNA.

It belongs to the RuvB family. In terms of assembly, homohexamer. Forms an RuvA(8)-RuvB(12)-Holliday junction (HJ) complex. HJ DNA is sandwiched between 2 RuvA tetramers; dsDNA enters through RuvA and exits via RuvB. An RuvB hexamer assembles on each DNA strand where it exits the tetramer. Each RuvB hexamer is contacted by two RuvA subunits (via domain III) on 2 adjacent RuvB subunits; this complex drives branch migration. In the full resolvosome a probable DNA-RuvA(4)-RuvB(12)-RuvC(2) complex forms which resolves the HJ.

Its subcellular location is the cytoplasm. The enzyme catalyses ATP + H2O = ADP + phosphate + H(+). In terms of biological role, the RuvA-RuvB-RuvC complex processes Holliday junction (HJ) DNA during genetic recombination and DNA repair, while the RuvA-RuvB complex plays an important role in the rescue of blocked DNA replication forks via replication fork reversal (RFR). RuvA specifically binds to HJ cruciform DNA, conferring on it an open structure. The RuvB hexamer acts as an ATP-dependent pump, pulling dsDNA into and through the RuvAB complex. RuvB forms 2 homohexamers on either side of HJ DNA bound by 1 or 2 RuvA tetramers; 4 subunits per hexamer contact DNA at a time. Coordinated motions by a converter formed by DNA-disengaged RuvB subunits stimulates ATP hydrolysis and nucleotide exchange. Immobilization of the converter enables RuvB to convert the ATP-contained energy into a lever motion, pulling 2 nucleotides of DNA out of the RuvA tetramer per ATP hydrolyzed, thus driving DNA branch migration. The RuvB motors rotate together with the DNA substrate, which together with the progressing nucleotide cycle form the mechanistic basis for DNA recombination by continuous HJ branch migration. Branch migration allows RuvC to scan DNA until it finds its consensus sequence, where it cleaves and resolves cruciform DNA. In Bacillus pumilus (strain SAFR-032), this protein is Holliday junction branch migration complex subunit RuvB.